A 1049-amino-acid polypeptide reads, in one-letter code: Dyslexia-associated protein KIAA0319-like protein (1049 aa).

Residues methionine 1–arginine 29 lie on the Cytoplasmic side of the membrane. The chain crosses the membrane as a helical span at residues threonine 30–serine 50. The region spanning alanine 49–methionine 127 is the MANSC domain. The Extracellular portion of the chain corresponds to glutamate 51–tyrosine 932. Residues threonine 234 to valine 277 form a disordered region. N-linked (GlcNAc...) asparagine glycans are attached at residues asparagine 247, asparagine 395, and asparagine 487. PKD domains follow at residues valine 310–glutamate 401, isoleucine 409–alanine 498, valine 504–glutamate 594, glutamine 600–glutamate 688, and isoleucine 694–aspartate 785. Residues valine 933–cysteine 953 form a helical membrane-spanning segment. The Cytoplasmic segment spans residues cysteine 954–leucine 1049. Threonine 974 carries the phosphothreonine modification. A phosphoserine mark is found at serine 978, serine 1009, and serine 1031. Residues glycine 1022–leucine 1049 form a disordered region. Positions glutamine 1028 to threonine 1037 are enriched in polar residues. Threonine 1037 carries the post-translational modification Phosphothreonine.

As to quaternary structure, interacts with RTN4R. Post-translationally, N-glycosylated.

Its subcellular location is the cytoplasmic granule membrane. It is found in the golgi apparatus membrane. The protein localises to the golgi apparatus. It localises to the trans-Golgi network membrane. The protein resides in the cell membrane. In terms of biological role, possible role in axon guidance through interaction with RTN4R. The polypeptide is Dyslexia-associated protein KIAA0319-like protein (Pongo abelii (Sumatran orangutan)).